A 1516-amino-acid chain; its full sequence is EF-hand calcium-binding domain-containing protein 6 (1516 aa).

Positions 1-23 (MKRNGTRLNFAKANSTKSGSTRA) are disordered. Polar residues predominate over residues 12 to 21 (KANSTKSGST). EF-hand domains follow at residues 96 to 131 (SRRDDIKKVFQILDRNHNQMVTKGDLKRVITAFLIP), 197 to 232 (RNMRSIRKVFQVMDVNNTGLVQPQELRRVLETFCLR), 321 to 356 (KSYEKIEKALSAGDPSKGGYISLNYLKVVLDTFIYR), 444 to 462 (SGHITWEELRHILNCMVAK), and 528 to 563 (RNLQAFYSMLQSYDLRDTGTIGKNNFRKVMRVFCPY). The Ca(2+) site is built by Asp109, Asn111, Asn113, Met115, Asp120, Asp210, Asn212, Thr214, and Glu221. Residues 618–638 (EEPGQQDERTQPSGEKTSEIN) are disordered. Positions 628–638 (QPSGEKTSEIN) are enriched in polar residues. EF-hand domains follow at residues 674-690 (KINQEEFRKVLERSGMP), 763-798 (ESFRDVYSAFFRIDLDRDGIISMHDFHRLLQYLQLN), 905-940 (LTPREFEKLWQNYDTEGRGYITYQEFLHRLGIRYSP), 1086-1121 (SSQPALVEAFSALDKEDTGFVKAMEFGDVLRSVCQK), 1193-1228 (SHYHTIVQEFENFDTLKSNTVSRDEFRSICTRHIQI), and 1229-1264 (LTDEQFDRLWSELPVNAKGRLKYQDFLSKLSIERVP). Ca(2+) is bound by residues Asp776, Asp778, Asp780, and Asp787. The residue at position 906 (Thr906) is a Phosphothreonine. The disordered stretch occupies residues 1263 to 1318 (VPSPPMAAGDSGESTMAQRGSSAPEFSQGTRSNLYSPPRDSRVGLKSRSHPCTPVG). At Ser1265 the chain carries Phosphoserine. Residues 1274-1297 (GESTMAQRGSSAPEFSQGTRSNLY) are compositionally biased toward polar residues. Ser1311 bears the Phosphoserine mark. Phosphothreonine occurs at positions 1315 and 1319. The segment at 1318 to 1516 (GTPPLQNCEP…YNDFLRAFLQ (199 aa)) is interaction with PARK7. EF-hand domains follow at residues 1348–1373 (KEKDTDKQGTISAAEFLALVEKFKLD), 1374–1409 (ISREESQQLIVKYDLKNNGKFAYCDFIQSCVLLLKA), 1454–1484 (MRRSFKTYDKNGTGLLSVADFRKVLRQYSIN), and 1485–1516 (LSEEEFFHVLEYYDKSLSSKISYNDFLRAFLQ). The interaction with AR stretch occupies residues 1422–1516 (NADKMKEAGM…YNDFLRAFLQ (95 aa)). The Ca(2+) site is built by Asp1462, Asn1464, Thr1466, and Asp1473.

In terms of assembly, microtubule inner protein component of sperm flagellar doublet microtubules. Binds PARK7. Part of a ternary complex containing PARK7, EFCAB6/DJBP and AR.

The protein resides in the nucleus. The protein localises to the cytoplasm. It is found in the cytoskeleton. It localises to the flagellum axoneme. Negatively regulates the androgen receptor by recruiting histone deacetylase complex, and protein DJ-1 antagonizes this inhibition by abrogation of this complex. Microtubule inner protein (MIP) part of the dynein-decorated doublet microtubules (DMTs) in cilia axoneme, which is required for motile cilia beating. The chain is EF-hand calcium-binding domain-containing protein 6 (Efcab6) from Mus musculus (Mouse).